Here is a 549-residue protein sequence, read N- to C-terminus: Cytochrome c oxidase subunit 1 homolog, bacteroid (549 aa).

Helical transmembrane passes span 12 to 32 (IGES…VIAA), 39 to 59 (PFAF…FCIV), and 87 to 107 (FSSF…LIIA). H131 is a binding site for heme b. The next 8 membrane-spanning stretches (helical) occupy residues 132-152 (TSAV…FYVV), 168-188 (FVVV…LLGV), 201-221 (ADLW…ATII), 228-248 (IFVA…LHLG), 279-299 (GHNA…YYFI), 312-332 (LSII…PHHL), 344-364 (LGMT…INGL), and 382-402 (MLVV…MMSI). 3 residues coordinate Cu cation: H280, H330, and H331. Positions 418 and 420 each coordinate heme b. 3 consecutive transmembrane segments (helical) span residues 423 to 443 (ALGW…PWAW), 458 to 478 (FWVA…SGIL), and 512 to 532 (AGGG…WMTV).

This sequence belongs to the heme-copper respiratory oxidase family. Cu(2+) is required as a cofactor. Requires heme b as cofactor.

Its subcellular location is the cell membrane. It carries out the reaction 4 Fe(II)-[cytochrome c] + O2 + 8 H(+)(in) = 4 Fe(III)-[cytochrome c] + 2 H2O + 4 H(+)(out). Its pathway is energy metabolism; oxidative phosphorylation. Functionally, cytochrome c oxidase is the component of the respiratory chain that catalyzes the reduction of oxygen to water. Subunits 1-3 form the functional core of the enzyme complex. Co I is the catalytic subunit of the enzyme. Electrons originating in cytochrome c or a quinol are transferred to the bimetallic center formed by a high-spin heme and copper B. The chain is Cytochrome c oxidase subunit 1 homolog, bacteroid (fixN) from Bradyrhizobium diazoefficiens (strain JCM 10833 / BCRC 13528 / IAM 13628 / NBRC 14792 / USDA 110).